We begin with the raw amino-acid sequence, 382 residues long: D-galactonate dehydratase (382 aa).

Asp183 contributes to the Mg(2+) binding site. The active-site Proton donor is the His185. 2 residues coordinate Mg(2+): Glu209 and Glu235. The Proton acceptor role is filled by His285.

This sequence belongs to the mandelate racemase/muconate lactonizing enzyme family. GalD subfamily. The cofactor is Mg(2+).

The enzyme catalyses D-galactonate = 2-dehydro-3-deoxy-D-galactonate + H2O. It functions in the pathway carbohydrate acid metabolism; D-galactonate degradation; D-glyceraldehyde 3-phosphate and pyruvate from D-galactonate: step 1/3. Functionally, catalyzes the dehydration of D-galactonate to 2-keto-3-deoxy-D-galactonate. This is D-galactonate dehydratase from Ralstonia nicotianae (strain ATCC BAA-1114 / GMI1000) (Ralstonia solanacearum).